The chain runs to 612 residues: Pentatricopeptide repeat-containing protein At4g14050, mitochondrial (612 aa).

The N-terminal 24 residues, 1–24 (MLIPHYLHQLQLCARNRTLTTAKA), are a transit peptide targeting the mitochondrion. PPR repeat units lie at residues 37–71 (CCPL…DHIA), 72–103 (WASV…GLRP), 104–138 (DDFV…EYAN), 139–169 (DEVV…IRVK), 170–204 (NTIS…NLYS), 205–235 (WTAL…RVDI), 237–271 (DPLV…GFDS), 272–302 (CVFI…MRHR), 303–337 (DVVS…GVKP), 338–373 (NEVT…GIRP), and 374–408 (SLQH…PDEP). Residues 409–485 (TWAALLSACK…DPGHSSVEVR (77 aa)) are type E motif. The interval 486–516 (KETEVFYAGETSHPLKEDIFRLLKKLEEEMR) is type E(+) motif. Residues 518 to 612 (RNGYVPDTSW…GGKCSCNDFW (95 aa)) form a type DYW motif region.

It belongs to the PPR family. PCMP-H subfamily. Interacts with MORF8/RIP1 and MORF1/RIP8.

The protein localises to the mitochondrion. Involved in C-to-U editing of mitochondrial RNA. Required specifically for editing the mitochondrial NAD4, MT-CYB/COB and RPL16 transcripts. The chain is Pentatricopeptide repeat-containing protein At4g14050, mitochondrial (PCMP-H13) from Arabidopsis thaliana (Mouse-ear cress).